We begin with the raw amino-acid sequence, 207 residues long: Small ribosomal subunit protein uS4 (207 aa).

Over residues 29–38 (SDKAKFDSKP) the composition is skewed to basic and acidic residues. The segment at 29-54 (SDKAKFDSKPGQHGRTSGTRTSDYGL) is disordered. The segment covering 42–52 (GRTSGTRTSDY) has biased composition (polar residues). Positions 97–160 (SRLDNVVYRM…KKQTRIAEAL (64 aa)) constitute an S4 RNA-binding domain.

This sequence belongs to the universal ribosomal protein uS4 family. Part of the 30S ribosomal subunit. Contacts protein S5. The interaction surface between S4 and S5 is involved in control of translational fidelity.

Its function is as follows. One of the primary rRNA binding proteins, it binds directly to 16S rRNA where it nucleates assembly of the body of the 30S subunit. In terms of biological role, with S5 and S12 plays an important role in translational accuracy. This chain is Small ribosomal subunit protein uS4, found in Polaromonas naphthalenivorans (strain CJ2).